We begin with the raw amino-acid sequence, 322 residues long: N-acetyl-gamma-glutamyl-phosphate reductase (322 aa).

The active site involves cysteine 132.

It belongs to the NAGSA dehydrogenase family. Type 1 subfamily.

It is found in the cytoplasm. It carries out the reaction N-acetyl-L-glutamate 5-semialdehyde + phosphate + NADP(+) = N-acetyl-L-glutamyl 5-phosphate + NADPH + H(+). Its pathway is amino-acid biosynthesis; L-arginine biosynthesis; N(2)-acetyl-L-ornithine from L-glutamate: step 3/4. Functionally, catalyzes the NADPH-dependent reduction of N-acetyl-5-glutamyl phosphate to yield N-acetyl-L-glutamate 5-semialdehyde. In Phocaeicola vulgatus (strain ATCC 8482 / DSM 1447 / JCM 5826 / CCUG 4940 / NBRC 14291 / NCTC 11154) (Bacteroides vulgatus), this protein is N-acetyl-gamma-glutamyl-phosphate reductase.